We begin with the raw amino-acid sequence, 423 residues long: Hemoglobinase (423 aa).

The first 18 residues, 1 to 18, serve as a signal peptide directing secretion; the sequence is MFYSIFFIHILRIVLVDC. Residues 19–29 constitute a propeptide that is removed on maturation; sequence NEYSEENVDDR. Residues H145 and C186 contribute to the active site. Residues 286 to 307 form a disordered region; it reads RKKASTEHDEPPMKPKDSIPSR. Residues 286-423 constitute a propeptide that is removed on maturation; the sequence is RKKASTEHDE…INGVIRKVCG (138 aa). A compositionally biased stretch (basic and acidic residues) spans 289-305; sequence ASTEHDEPPMKPKDSIP.

This sequence belongs to the peptidase C13 family. As to expression, gut.

It carries out the reaction Hydrolysis of proteins and small molecule substrates at -Asn-|-Xaa- bonds.. This protease is used by the parasite for degradation of the host globin. In Schistosoma japonicum (Blood fluke), this protein is Hemoglobinase (HAEM).